Reading from the N-terminus, the 126-residue chain is Aspartate 1-decarboxylase (126 aa).

Serine 25 (schiff-base intermediate with substrate; via pyruvic acid) is an active-site residue. A Pyruvic acid (Ser) modification is found at serine 25. Threonine 57 contacts substrate. Catalysis depends on tyrosine 58, which acts as the Proton donor. Glycine 73–alanine 75 provides a ligand contact to substrate.

The protein belongs to the PanD family. As to quaternary structure, heterooctamer of four alpha and four beta subunits. Pyruvate serves as cofactor. Is synthesized initially as an inactive proenzyme, which is activated by self-cleavage at a specific serine bond to produce a beta-subunit with a hydroxyl group at its C-terminus and an alpha-subunit with a pyruvoyl group at its N-terminus.

The protein localises to the cytoplasm. It catalyses the reaction L-aspartate + H(+) = beta-alanine + CO2. It functions in the pathway cofactor biosynthesis; (R)-pantothenate biosynthesis; beta-alanine from L-aspartate: step 1/1. Its function is as follows. Catalyzes the pyruvoyl-dependent decarboxylation of aspartate to produce beta-alanine. The polypeptide is Aspartate 1-decarboxylase (Nitrosococcus oceani (strain ATCC 19707 / BCRC 17464 / JCM 30415 / NCIMB 11848 / C-107)).